Reading from the N-terminus, the 444-residue chain is Phosphoglucosamine mutase (444 aa).

Residue Ser-102 is the Phosphoserine intermediate of the active site. Residues Ser-102, Asp-241, Asp-243, and Asp-245 each coordinate Mg(2+). Ser-102 is subject to Phosphoserine.

It belongs to the phosphohexose mutase family. The cofactor is Mg(2+). Activated by phosphorylation.

It carries out the reaction alpha-D-glucosamine 1-phosphate = D-glucosamine 6-phosphate. Functionally, catalyzes the conversion of glucosamine-6-phosphate to glucosamine-1-phosphate. This is Phosphoglucosamine mutase from Buchnera aphidicola subsp. Acyrthosiphon pisum (strain 5A).